A 290-amino-acid chain; its full sequence is Sodium/potassium-transporting ATPase subunit beta-2 (290 aa).

The Cytoplasmic portion of the chain corresponds to 1–39 (MVIQKEKKSCGQVVEEWKEFVWNPRTHQFMGRTGTSWAF). Residues 40–67 (ILLFYLVFYGFLTAMFTLTMWVMLQTVS) form a helical; Signal-anchor for type II membrane protein membrane-spanning segment. Topologically, residues 68–290 (DHTPKYQDRL…VAFKLRINKA (223 aa)) are extracellular. Asn96 and Asn118 each carry an N-linked (GlcNAc...) asparagine glycan. Residues Cys129 and Cys150 are joined by a disulfide bond. N-linked (GlcNAc...) asparagine glycosylation is found at Asn153 and Asn159. Cysteines 160 and 177 form a disulfide. Asn193, Asn197, and Asn238 each carry an N-linked (GlcNAc...) asparagine glycan. Residues 193 to 290 (NQSMNVTCVG…VAFKLRINKA (98 aa)) are immunoglobulin-like. The cysteines at positions 200 and 261 are disulfide-linked.

It belongs to the X(+)/potassium ATPases subunit beta family. As to quaternary structure, the sodium/potassium-transporting ATPase is composed of a catalytic alpha subunit, an auxiliary non-catalytic beta subunit and an additional regulatory subunit. Interacts with isoform 2 of BSG. In terms of tissue distribution, highly expressed in brain (at protein level).

Its subcellular location is the cell membrane. This is the non-catalytic component of the active enzyme, which catalyzes the hydrolysis of ATP coupled with the exchange of Na(+) and K(+) ions across the plasma membrane. The exact function of the beta-2 subunit is not known. In terms of biological role, mediates cell adhesion of neurons and astrocytes, and promotes neurite outgrowth. This is Sodium/potassium-transporting ATPase subunit beta-2 (Atp1b2) from Rattus norvegicus (Rat).